A 239-amino-acid chain; its full sequence is Uridylate kinase (239 aa).

Residue 13-16 coordinates ATP; it reads KLSG. Glycine 55 lines the UMP pocket. ATP-binding residues include glycine 56 and arginine 60. UMP contacts are provided by residues aspartate 75 and 136–143; that span reads TGNPFFTT. Residues threonine 163, asparagine 164, tyrosine 169, and aspartate 172 each contribute to the ATP site.

It belongs to the UMP kinase family. In terms of assembly, homohexamer.

The protein localises to the cytoplasm. It catalyses the reaction UMP + ATP = UDP + ADP. Its pathway is pyrimidine metabolism; CTP biosynthesis via de novo pathway; UDP from UMP (UMPK route): step 1/1. Its activity is regulated as follows. Inhibited by UTP. Functionally, catalyzes the reversible phosphorylation of UMP to UDP. This chain is Uridylate kinase, found in Neisseria meningitidis serogroup C / serotype 2a (strain ATCC 700532 / DSM 15464 / FAM18).